A 101-amino-acid polypeptide reads, in one-letter code: MKKRLTESQFQEAIQGLEVGQQTIEIARGVLVDGKPQATFATSLGLTRGAVSQAVHRVWAAFEDKNLPEGYARVTAVLPEHQAYIVRKWEADAKKKQETKR.

The segment at residues 37-56 is a DNA-binding region (H-T-H motif); that stretch reads QATFATSLGLTRGAVSQAVH.

Its function is as follows. In conjunction with KorB, inhibits the transcription of kilA, trfA and korAB operons. In conjunction with KorC is responsible for the negative control of kilC and kilE operons. This Escherichia coli protein is TrfB transcriptional repressor protein (trfB).